The following is a 214-amino-acid chain: Probable nicotinate-nucleotide adenylyltransferase (214 aa).

It belongs to the NadD family.

It catalyses the reaction nicotinate beta-D-ribonucleotide + ATP + H(+) = deamido-NAD(+) + diphosphate. The protein operates within cofactor biosynthesis; NAD(+) biosynthesis; deamido-NAD(+) from nicotinate D-ribonucleotide: step 1/1. Catalyzes the reversible adenylation of nicotinate mononucleotide (NaMN) to nicotinic acid adenine dinucleotide (NaAD). In Aeromonas hydrophila subsp. hydrophila (strain ATCC 7966 / DSM 30187 / BCRC 13018 / CCUG 14551 / JCM 1027 / KCTC 2358 / NCIMB 9240 / NCTC 8049), this protein is Probable nicotinate-nucleotide adenylyltransferase.